Here is a 280-residue protein sequence, read N- to C-terminus: 4-diphosphocytidyl-2-C-methyl-D-erythritol kinase (280 aa).

Residue K8 is part of the active site. Position 91–101 (91–101 (PVSAGLAGGST)) interacts with ATP. The active site involves D133.

The protein belongs to the GHMP kinase family. IspE subfamily.

It catalyses the reaction 4-CDP-2-C-methyl-D-erythritol + ATP = 4-CDP-2-C-methyl-D-erythritol 2-phosphate + ADP + H(+). It participates in isoprenoid biosynthesis; isopentenyl diphosphate biosynthesis via DXP pathway; isopentenyl diphosphate from 1-deoxy-D-xylulose 5-phosphate: step 3/6. In terms of biological role, catalyzes the phosphorylation of the position 2 hydroxy group of 4-diphosphocytidyl-2C-methyl-D-erythritol. This is 4-diphosphocytidyl-2-C-methyl-D-erythritol kinase from Clostridium botulinum (strain Eklund 17B / Type B).